The following is a 534-amino-acid chain: Anther-specific proline-rich protein APG (534 aa).

The N-terminal stretch at methionine 1–alanine 35 is a signal peptide. Pro residues predominate over residues asparagine 59–lysine 196. The interval asparagine 59–isoleucine 202 is disordered. The active-site Nucleophile is the serine 211. Active-site residues include aspartate 508 and histidine 511.

It belongs to the 'GDSL' lipolytic enzyme family. In terms of tissue distribution, found in sporophytic and gametophytic cell types in the anther, only in male fertile plants.

The polypeptide is Anther-specific proline-rich protein APG (APG) (Arabidopsis thaliana (Mouse-ear cress)).